The primary structure comprises 732 residues: MGRREEMIAKIKELMTQPERIRNMGIAAHIDHGKTTLSDNLLAGAGMISEELAGKQLVLDFDEQEQARGITINAANVSMVHNYEGQDYLINLIDTPGHVDFGGDVTRAMRAIDGAIIVVDAVEGVMPQTETVLRQALREYVKPVLFINKVDRLIKELKLGPNEILQRFAKIITDVNRLIKRYAPEEFKSQWMVKVEDGSVAFGSAYYNWALSVPFMKKTGVSFKDIVELTNKGDLKGLRQKAPLHVVVLDMVVRHLPNPLEAQKYRIPHLWRGDINSDVGQAMLKCDPKGKMVMVVTKIILDKHAGEVATGRVWSGTVKTGQEVYLINSKRKARIQQVGIYMGPERINMEAVPAGNIVAVTGLRDAMAGETVSVEKIEPFEALHYTSEPVVTVAIEAKNVKDLPKLIEALRQLAKEDPTLHVKIDEETGQHLLSGMGELHLEVKLYRLKTEWKLDVDVSPPIVVYRESVTKKSPIVEGKSPNKHNRFYITVEPMPDEIYEAIREGIIPEGRPKNPKEVAKKLAELGMDYELAKGIVDVYNGNMFFDNTKGIQYLNEVMDLLVDGFHMAMDEGPLAKEPVMKVIVRLHDAKIHEDNVHRGPAQIYPAIRTAIHCAMMKAGPVLYEPYQKVIINIPYEYMGAVSRELNQRRGQLIDMRQEGEVMIIIGEAPVAEMFGFAGAIRGATSGKALWTTEHAGFKRVPNELAQQIIRQIRQRKGLDPNPPTEKDVCPQQ.

The region spanning 19 to 230 (ERIRNMGIAA…VSFKDIVELT (212 aa)) is the tr-type G domain. GTP contacts are provided by residues 28 to 35 (AHIDHGKT), 94 to 98 (DTPGH), and 148 to 151 (NKVD). His597 carries the diphthamide modification.

The protein belongs to the TRAFAC class translation factor GTPase superfamily. Classic translation factor GTPase family. EF-G/EF-2 subfamily.

The protein localises to the cytoplasm. Catalyzes the GTP-dependent ribosomal translocation step during translation elongation. During this step, the ribosome changes from the pre-translocational (PRE) to the post-translocational (POST) state as the newly formed A-site-bound peptidyl-tRNA and P-site-bound deacylated tRNA move to the P and E sites, respectively. Catalyzes the coordinated movement of the two tRNA molecules, the mRNA and conformational changes in the ribosome. The chain is Elongation factor 2 from Thermococcus gammatolerans (strain DSM 15229 / JCM 11827 / EJ3).